A 711-amino-acid polypeptide reads, in one-letter code: MLNFFAAAPRGYEYALSLELADLGASDIKESVAGVYFSASLELGYRITLWSRIASRIIFVIHKGPCESPEQLYNAAYGIDWQMEFNHRSTFSIDFHGMGGFINNTMFGALKIKDAIVDRFRDDDCPRPDVARVDADFRIDAHYRRGQITIGLNFSGPALHKRGYRDITGEAPLKENLAANMLMRSGWQKNPVSLLDPFCGSGTILIEAAMMACDMAPGLHRERFGFEHWLRHNDKYWQELLDEAKARASIGITRCKTKFYGSDIDSRIVALAKKNAANAGVLELIDFSVTNALNVKVPEETGYLITNPPYGERLGTVTALLQLYYQLGDKFKAEFGGWNLAVLNSDVELLSALKLKADKQMKMNNGALECAFNLYTVHATNTRRVDPSNINREGDVSDIAVPFVNRVKKNIKQLQKWAKKEGIDSYRIYDADLPDYKVAIDKYLDYVVIQEYTAPVDIPESVTKRRLTDVLITLPGAIGIDPNNIILKTREKQKGTNQYEKIQANKLELITTEYGAKFKLNLKEYLDTGLFLDHRLTRKLVGEKSKDRDVLNLFAYTGTASVHAALGGAKSVKTVDMSNTYTNWAKENFALNGLNDDKYQFVQANCMQWIKTTHDKFDLIFIDPPTFSNSKRMEDSFDVLRDHVPLLSSLIKLLNPNGEIIFSNNKRKFKMEIEALEALNFTVKNIDNQTLPLDFKRNPQIHNTWLLTHGG.

The THUMP domain maps to 43-154 (LGYRITLWSR…RGQITIGLNF (112 aa)).

The protein belongs to the methyltransferase superfamily. RlmKL family.

The protein localises to the cytoplasm. The catalysed reaction is guanosine(2445) in 23S rRNA + S-adenosyl-L-methionine = N(2)-methylguanosine(2445) in 23S rRNA + S-adenosyl-L-homocysteine + H(+). The enzyme catalyses guanosine(2069) in 23S rRNA + S-adenosyl-L-methionine = N(2)-methylguanosine(2069) in 23S rRNA + S-adenosyl-L-homocysteine + H(+). Functionally, specifically methylates the guanine in position 2445 (m2G2445) and the guanine in position 2069 (m7G2069) of 23S rRNA. This chain is Ribosomal RNA large subunit methyltransferase K/L, found in Shewanella woodyi (strain ATCC 51908 / MS32).